The following is a 248-amino-acid chain: tRNA pseudouridine synthase A (248 aa).

Aspartate 52 (nucleophile) is an active-site residue. Tyrosine 111 lines the substrate pocket.

It belongs to the tRNA pseudouridine synthase TruA family. In terms of assembly, homodimer.

It carries out the reaction uridine(38/39/40) in tRNA = pseudouridine(38/39/40) in tRNA. Functionally, formation of pseudouridine at positions 38, 39 and 40 in the anticodon stem and loop of transfer RNAs. The chain is tRNA pseudouridine synthase A from Methylocella silvestris (strain DSM 15510 / CIP 108128 / LMG 27833 / NCIMB 13906 / BL2).